The sequence spans 172 residues: Adenine phosphoribosyltransferase (172 aa).

It belongs to the purine/pyrimidine phosphoribosyltransferase family. Homodimer.

It localises to the cytoplasm. It carries out the reaction AMP + diphosphate = 5-phospho-alpha-D-ribose 1-diphosphate + adenine. Its pathway is purine metabolism; AMP biosynthesis via salvage pathway; AMP from adenine: step 1/1. Catalyzes a salvage reaction resulting in the formation of AMP, that is energically less costly than de novo synthesis. This is Adenine phosphoribosyltransferase from Methanococcus maripaludis (strain C5 / ATCC BAA-1333).